The primary structure comprises 328 residues: Transcription factor bHLH25 (328 aa).

The segment at 125–152 (PHQKSDEFNRKGTKRAQPFSRNQSNAQD) is disordered. In terms of domain architecture, bHLH spans 148-197 (SNAQDHIIAERKRREKLTQRFVALSALVPGLKKMDKASVLGDALKHIKYL).

In terms of assembly, homodimer. Expressed in flowers.

It localises to the nucleus. The polypeptide is Transcription factor bHLH25 (BHLH25) (Arabidopsis thaliana (Mouse-ear cress)).